The sequence spans 290 residues: Probable aquaporin PIP2-7 (290 aa).

2 helical membrane-spanning segments follow: residues 45 to 65 and 79 to 99; these read ALIAEFMATLIFLYVSIATVI and GVGYLGVAWSFGATIFVLVYC. The short motif at 109-111 is the NPA 1 element; the sequence is NPA. Transmembrane regions (helical) follow at residues 128-148, 168-188, and 202-222; these read VLYVVAQCLGAIAGAGIVKGI, SAAGALGAEIVGTFILVYTVF, and IPVLVPLPIGFAVFVVHLATI. Residues 230-232 carry the NPA 2 motif; sequence NPA. Residues 252–272 form a helical membrane-spanning segment; sequence IFWVGPVIGAFLAAAYHKLVL.

The protein belongs to the MIP/aquaporin (TC 1.A.8) family. PIP (TC 1.A.8.11) subfamily. In terms of tissue distribution, expressed in roots.

Its subcellular location is the cell membrane. In terms of biological role, aquaporins facilitate the transport of water and small neutral solutes across cell membranes. This Oryza sativa subsp. japonica (Rice) protein is Probable aquaporin PIP2-7 (PIP2-7).